Here is a 107-residue protein sequence, read N- to C-terminus: U1-lycotoxin-Ls1b (107 aa).

A signal peptide spans 1-20 (MMKVLVVIALLVTLISYSSS). Residues 21 to 41 (EGIDDLEADELLSLMANEQTR) constitute a propeptide that is removed on maturation. 4 disulfide bridges follow: Cys-44–Cys-59, Cys-51–Cys-68, Cys-58–Cys-86, and Cys-70–Cys-84.

The protein belongs to the neurotoxin 19 (CSTX) family. 04 (U1-Lctx) subfamily. Expressed by the venom gland.

Its subcellular location is the secreted. This Lycosa singoriensis (Wolf spider) protein is U1-lycotoxin-Ls1b.